The sequence spans 222 residues: Small ribosomal subunit protein uS5 (222 aa).

A disordered region spans residues 1 to 41 (MAEQAGAGSAQDNRGGGRDDRGGRGRRDDRGGRGGRDDREK). Basic and acidic residues predominate over residues 15–41 (GGGRDDRGGRGRRDDRGGRGGRDDREK). The S5 DRBM domain maps to 44–107 (YLERVVTINR…EEARKNFFRV (64 aa)).

Belongs to the universal ribosomal protein uS5 family. Part of the 30S ribosomal subunit. Contacts proteins S4 and S8.

Functionally, with S4 and S12 plays an important role in translational accuracy. Its function is as follows. Located at the back of the 30S subunit body where it stabilizes the conformation of the head with respect to the body. The protein is Small ribosomal subunit protein uS5 of Mycolicibacterium gilvum (strain PYR-GCK) (Mycobacterium gilvum (strain PYR-GCK)).